Reading from the N-terminus, the 266-residue chain is MINYRHIVFCLCVMVVVDSRLTPYLAAIEQVDPIVKIVLPIVGRFDPEEFVTSWQGNNPCEWFGTNCLEGIIIGISFISLNLIGTISPHFADLTSLRVIDLSHNRLKCTIPFEITKLKNLTIVDVSYNQLHGEVPRVRGIVILTERNPNIESTCLLVPSPTRNKNKPTVLVLLLGILVGLVVAGGASFGFYLYRIRKQPKRLQEPNEAVTLTQQQSSDESLVSDESYVISLQLQYRVLRRFSWVSKGPLLLTRQLKTNQNPHLPYM.

A signal peptide spans 1-19; sequence MINYRHIVFCLCVMVVVDS. Topologically, residues 20 to 169 are extracellular; that stretch reads RLTPYLAAIE…PTRNKNKPTV (150 aa). LRR repeat units lie at residues 93–117 and 119–143; these read LTSL…ITKL and NLTI…IVIL. Residue N119 is glycosylated (N-linked (GlcNAc...) asparagine). The chain crosses the membrane as a helical span at residues 170–190; the sequence is LVLLLGILVGLVVAGGASFGF. The Cytoplasmic portion of the chain corresponds to 191–266; sequence YLYRIRKQPK…TNQNPHLPYM (76 aa).

Belongs to the RLP family.

The protein resides in the cell membrane. This chain is Receptor-like protein 5, found in Arabidopsis thaliana (Mouse-ear cress).